Consider the following 953-residue polypeptide: Nonsense-mediated mRNA decay factor SMG8 (953 aa).

2 disordered regions span residues 571–604 (AQDAELDPDEEDEELPTGEREEQHITQSNGCSQP) and 629–653 (PCFDQSSSSEAESTCSGTSSEESNN). The span at 574–586 (AELDPDEEDEELP) shows a compositional bias: acidic residues. A compositionally biased stretch (polar residues) spans 595 to 604 (ITQSNGCSQP). Positions 634–653 (SSSSEAESTCSGTSSEESNN) are enriched in low complexity.

This sequence belongs to the SMG8 family.

In terms of biological role, involved in nonsense-mediated decay (NMD) of mRNAs containing premature stop codons. Probable component of kinase complex containing nonC and recruited to stalled ribosomes. The protein is Nonsense-mediated mRNA decay factor SMG8 of Drosophila persimilis (Fruit fly).